The primary structure comprises 506 residues: MKGIPKRPISNYIEKTNETNLYKIRKGLVNEMNVEGHIYVNEKLKTLLDEEIATYELNKNSTFLPAVMQIANVSTLPGIVKASIALPDVHAGYGFSIGNVAAFDMDNEKAIVSPGGVGFDINCGVRLIRTNLFYEDIKPKQEELTQLLFNHIPVGVGSQGFILCNQENLDDALCLGMDWCVKEGYSWIEDKLNCEDNGRSLYADSNFVSIRAKKRGITQMGTLGAGNHYAEIQIVDQIYDKKSAKLMGIEKKNQVCIMIHSGSRGLGHQIATDALIDMEKSMNKYKINVIDKQLACTPIHSKEGQNYLKAMGSACNFAWINRSSMTFLARQAFSKIFNQSPDDLDMHVIYDVSHNIAKIEEHYIDGKIKKLLVHRKGSTRAFPPFHPLVPLDYQYCGQPILIGGTMGTYSYVLTGNEKAMQATFGSTCHGAGRALSRNKSRNTLSYLDVLNKLKEQNISIRVASPKLIMEEAPESYKNVCDVVQTCHDAGISNKCFRLKPVAVIKG.

Residues Asp120, Cys123, His228, His260, and His354 each contribute to the Mn(2+) site. Position 227-231 (227-231 (NHYAE)) interacts with GMP. Residues 354–355 (HN), 403–406 (GGTM), Ser410, 429–432 (HGAG), and Lys505 each bind GMP. His429 serves as the catalytic GMP-histidine intermediate.

Belongs to the RtcB family. In terms of assembly, catalytic component of the tRNA-splicing ligase complex. The cofactor is Mn(2+).

The catalysed reaction is a 3'-end 3'-phospho-ribonucleotide-RNA + a 5'-end dephospho-ribonucleoside-RNA + GTP = a ribonucleotidyl-ribonucleotide-RNA + GMP + diphosphate. It catalyses the reaction a 3'-end 2',3'-cyclophospho-ribonucleotide-RNA + a 5'-end dephospho-ribonucleoside-RNA + GTP + H2O = a ribonucleotidyl-ribonucleotide-RNA + GMP + diphosphate + H(+). Functionally, catalytic subunit of the tRNA-splicing ligase complex that acts by directly joining spliced tRNA halves to mature-sized tRNAs by incorporating the precursor-derived splice junction phosphate into the mature tRNA as a canonical 3',5'-phosphodiester. May act as an RNA ligase with broad substrate specificity, and may function toward other RNAs. This chain is RNA-splicing ligase RtcB homolog, found in Plasmodium falciparum (isolate 3D7).